A 147-amino-acid polypeptide reads, in one-letter code: Hemoglobin subunit gamma (147 aa).

Residues 3-147 enclose the Globin domain; it reads HFTEEDKATI…VASALSSRYH (145 aa). 2 residues coordinate heme b: H64 and H93.

The protein belongs to the globin family. As to quaternary structure, heterotetramer of two alpha chains and two gamma chains in fetal hemoglobin (Hb F). Red blood cells.

Functionally, gamma chains make up the fetal hemoglobin F, in combination with alpha chains. This is Hemoglobin subunit gamma (HBG) from Macaca fuscata fuscata (Japanese macaque).